Consider the following 74-residue polypeptide: MQYSALIPLFILLISLVLFCFSFRKNQSENQIVKILFFAYCIDFLALILAVMLLTFLSHGLLSLAILIPVLVFQ.

Transmembrane regions (helical) follow at residues 3–23 (YSAL…CFSF) and 35–55 (ILFF…MLLT).

The protein resides in the cell membrane. This is an uncharacterized protein from Mycoplasma genitalium (strain ATCC 33530 / DSM 19775 / NCTC 10195 / G37) (Mycoplasmoides genitalium).